The following is a 462-amino-acid chain: MVVTQLSLEFRFQGKKLRGFSCELTRSPHGVLPESVLSTTCQVAIPILLSGLGMMTAGLVMNTVQHWPVFRDVKDLLTLVPPLVGLKGNLEMTLASRLSTSANTGQIDDRQERYRIISSNLAVVQVQATVVGLLAAVASLMLGTVSHEEFDWAKVALLCTSSVITAFLAALALGILMICIVIGARKFGVNPDNIATPIAASLGDLITLSILALMSSFFYSHRDTWYLTPLVCIGFLALTPLWIFIAKQNPPIMKILKYGWFPIILAMIISSFGGLILSKTISKHQFKGMAVLTPVICGVGGNLVAIQTSRISTFLHMWSTPGVLPVQMKRFWPNPCFTFCSSEINSVSARVLLFLVVPGHLIFFYLICLVEGQSVTSSKIFVLLYLMAGMMQVVILLYLAEVMVRLTWHQALDPDNHCIPYLTGLGDLLGTSLLALCFLLDWLLRGRANLAELVSELVSVPP.

The next 9 helical transmembrane spans lie at 41–61 (CQVA…GLVM), 121–141 (LAVV…ASLM), 163–183 (VITA…IVIG), 194–214 (IATP…LALM), 225–245 (WYLT…WIFI), 258–278 (YGWF…LILS), 351–371 (VLLF…CLVE), 380–400 (IFVL…LYLA), and 424–444 (GLGD…DWLL).

The protein belongs to the SLC41A transporter family.

It is found in the mitochondrion inner membrane. The enzyme catalyses Mg(2+)(in) + 2 Na(+)(out) = Mg(2+)(out) + 2 Na(+)(in). Its function is as follows. Na(+)/Mg(2+) ion exchanger that acts as a predominant Mg(2+) efflux system at the mitochondrial inner membrane. This Rattus norvegicus (Rat) protein is Solute carrier family 41 member 3 (Slc41a3).